The chain runs to 285 residues: NAD kinase (285 aa).

Catalysis depends on Asp68, which acts as the Proton acceptor. NAD(+) is bound by residues 68–69, 142–143, Arg153, Lys170, Asp172, and Gln242; these read DG and ND.

This sequence belongs to the NAD kinase family. A divalent metal cation serves as cofactor.

Its subcellular location is the cytoplasm. The enzyme catalyses NAD(+) + ATP = ADP + NADP(+) + H(+). In terms of biological role, involved in the regulation of the intracellular balance of NAD and NADP, and is a key enzyme in the biosynthesis of NADP. Catalyzes specifically the phosphorylation on 2'-hydroxyl of the adenosine moiety of NAD to yield NADP. The sequence is that of NAD kinase from Koribacter versatilis (strain Ellin345).